Consider the following 522-residue polypeptide: Poly(A) polymerase (522 aa).

ATP-binding positions include 63–65 (YGS), 76–78 (DID), D130, K193, Y202, and 211–212 (GI). Mg(2+) contacts are provided by D76, D78, and D130. A disordered region spans residues 475–522 (QLKAKEENSIPNEEKKEQLKKEMKQEANTIVKNSSTDDDFMKRFTRKN). The segment covering 476 to 499 (LKAKEENSIPNEEKKEQLKKEMKQ) has biased composition (basic and acidic residues).

It belongs to the poly(A) polymerase family. It depends on Mg(2+) as a cofactor. Requires Mn(2+) as cofactor.

The protein localises to the cytoplasm. Its subcellular location is the nucleus. The catalysed reaction is RNA(n) + ATP = RNA(n)-3'-adenine ribonucleotide + diphosphate. Polymerase that creates the 3'-poly(A) tail of mRNA's. May acquire specificity through interaction with a cleavage and polyadenylation factor. The sequence is that of Poly(A) polymerase from Entamoeba histolytica (strain ATCC 30459 / HM-1:IMSS / ABRM).